Consider the following 139-residue polypeptide: uncharacterized protein (139 aa).

In terms of domain architecture, HIT spans 3-110; it reads IFCNIVEGRD…VPTWSQDPDI (108 aa). Positions 95 to 99 match the Histidine triad motif motif; sequence HSHFH.

This is an uncharacterized protein from Saccharolobus solfataricus (strain ATCC 35092 / DSM 1617 / JCM 11322 / P2) (Sulfolobus solfataricus).